Reading from the N-terminus, the 224-residue chain is Glutathione S-transferase D7 (224 aa).

The GST N-terminal domain maps to 2-83; the sequence is PNLDLYNFPM…YLVEKYGKPD (82 aa). Glutathione-binding positions include 53-55 and 67-69; these read HTI and ESR. In terms of domain architecture, GST C-terminal spans 90 to 210; it reads DPQKRALINQ…LESLQQGKKF (121 aa).

Belongs to the GST superfamily. Delta family. In terms of assembly, homodimer.

It catalyses the reaction RX + glutathione = an S-substituted glutathione + a halide anion + H(+). Functionally, conjugation of reduced glutathione to a wide number of exogenous and endogenous hydrophobic electrophiles. May be involved in detoxification. The protein is Glutathione S-transferase D7 of Drosophila melanogaster (Fruit fly).